The sequence spans 349 residues: Inositol-tetrakisphosphate 1-kinase 2 (349 aa).

Residues Lys48 and Lys90 each coordinate 1D-myo-inositol 1,3,4-trisphosphate. ATP contacts are provided by Arg125 and Lys175. 1D-myo-inositol 1,3,4-trisphosphate-binding residues include His186 and Lys218. Residues 207–218 (QEFVNHGGILFK) and Ser233 contribute to the ATP site. Residues Asp298, Asp313, and Asn315 each contribute to the Mg(2+) site. Asn315 is a 1D-myo-inositol 1,3,4-trisphosphate binding site.

The protein belongs to the ITPK1 family. Monomer. The cofactor is Mg(2+).

It catalyses the reaction 1D-myo-inositol 3,4,5,6-tetrakisphosphate + ATP = 1D-myo-inositol 1,3,4,5,6-pentakisphosphate + ADP + H(+). The enzyme catalyses 1D-myo-inositol 1,3,4-trisphosphate + ATP = 1D-myo-inositol 1,3,4,5-tetrakisphosphate + ADP + H(+). It carries out the reaction 1D-myo-inositol 1,3,4-trisphosphate + ATP = 1D-myo-inositol 1,3,4,6-tetrakisphosphate + ADP + H(+). Functionally, kinase that can phosphorylate various inositol polyphosphate such as Ins(3,4,5,6)P4 or Ins(1,3,4)P3 and participates in phytic acid biosynthesis in developing seeds. Phytic acid is the primary storage form of phosphorus in cereal grains and other plant seeds. This chain is Inositol-tetrakisphosphate 1-kinase 2 (ITPK2), found in Oryza sativa subsp. indica (Rice).